The sequence spans 207 residues: Vascular endothelial growth factor B (207 aa).

The signal sequence occupies residues 1–21; that stretch reads MSPLLRRLLLVALLQLARTQA. Intrachain disulfides connect C47–C89, C78–C122, and C82–C124. Over residues 129-139 the composition is skewed to basic and acidic residues; the sequence is KESAVKPDRVA. Residues 129 to 178 are disordered; that stretch reads KESAVKPDRVAIPHHRPQPRSVPGWDSTPGASSPADIIHPTPAPGSSARL.

Belongs to the PDGF/VEGF growth factor family. In terms of assembly, homodimer; disulfide-linked. Can also form heterodimer with VEGF. In terms of processing, VEGF-B186 is O-glycosylated. As to expression, abundantly expressed in heart, brain, kidney and skeletal muscle.

It localises to the secreted. Its function is as follows. Growth factor for endothelial cells. VEGF-B167 binds heparin and neuropilin-1 whereas the binding to neuropilin-1 of VEGF-B186 is regulated by proteolysis. VEGF-B seems to be required for normal heart function in adult but is not required for proper development of the cardiovascular system either during development or for angiogenesis in adults. This is Vascular endothelial growth factor B (Vegfb) from Mus musculus (Mouse).